The chain runs to 3459 residues: uncharacterized protein (3459 aa).

The span at 158–167 (NDDDWIFNED) shows a compositional bias: acidic residues. Disordered regions lie at residues 158–230 (NDDD…NNNN) and 400–447 (YGYI…NDEK). The segment covering 168-184 (DEKKNKNNDGNDNRYDY) has biased composition (basic and acidic residues). The span at 185-201 (NDLQNNNNNDNNKYDYN) shows a compositional bias: low complexity. Over residues 204-221 (DDEKKNKNNDGDDNKYDY) the composition is skewed to basic and acidic residues. A compositionally biased stretch (acidic residues) spans 406-443 (DNDDGDDYNDDNDNDDNYNDDNYNDDNYNDDNYNDDNY). The stretch at 771–851 (VNEKKKGENE…NEMNKDEENE (81 aa)) forms a coiled coil. Residues 1059–1079 (LIYMIYLFFTYKKYDLLLMFI) form a helical membrane-spanning segment. Disordered regions lie at residues 1148–1187 (RRQE…NDYD), 1399–1467 (IPTQ…NDDD), and 1711–1733 (QKKK…NKEN). The segment covering 1404-1463 (DKNETDEGNKNETDEGDKNETDEGDKNETDEGNKNETEEIYKNETDEGNKNETEEIYKND) has biased composition (basic and acidic residues). 2 helical membrane-spanning segments follow: residues 2059 to 2079 (FLLF…IFFF) and 2197 to 2217 (IIQC…DFLF). 2 disordered regions span residues 2582 to 2644 (IYKD…DNNN) and 2776 to 2835 (GRIW…DKGD). The span at 2592–2629 (DNNDDDNINDDDNINDDDNINDDDNNNDDDNNNDDNND) shows a compositional bias: acidic residues. The span at 2779 to 2821 (WKREENGEKKKNEKNESEKNERNEKNEKNEKHEKHEKHEKNEK) shows a compositional bias: basic and acidic residues. A coiled-coil region spans residues 2785–2820 (GEKKKNEKNESEKNERNEKNEKNEKHEKHEKHEKNE). 2 helical membrane-spanning segments follow: residues 3229-3249 (LFII…SFIL) and 3296-3316 (LLFF…NINS).

It is found in the membrane. This is an uncharacterized protein from Plasmodium falciparum (isolate 3D7).